We begin with the raw amino-acid sequence, 266 residues long: Putative carbamate hydrolase RutD (266 aa).

Residues 14-116 (PVVVLISGLG…VLVSVNGWLR (103 aa)) form the AB hydrolase-1 domain.

The protein belongs to the AB hydrolase superfamily. Hydrolase RutD family.

The enzyme catalyses carbamate + 2 H(+) = NH4(+) + CO2. Its function is as follows. Involved in pyrimidine catabolism. May facilitate the hydrolysis of carbamate, a reaction that can also occur spontaneously. This Escherichia coli O81 (strain ED1a) protein is Putative carbamate hydrolase RutD.